Consider the following 503-residue polypeptide: Glycerol kinase (503 aa).

T14 is an ADP binding site. ATP contacts are provided by T14, T15, and S16. T14 contributes to the sn-glycerol 3-phosphate binding site. ADP is bound at residue R18. 4 residues coordinate sn-glycerol 3-phosphate: R84, E85, Y136, and D246. 5 residues coordinate glycerol: R84, E85, Y136, D246, and Q247. ADP contacts are provided by T268 and G311. Residues T268, G311, Q315, and G412 each coordinate ATP. Residues G412 and N416 each contribute to the ADP site.

It belongs to the FGGY kinase family.

The catalysed reaction is glycerol + ATP = sn-glycerol 3-phosphate + ADP + H(+). The protein operates within polyol metabolism; glycerol degradation via glycerol kinase pathway; sn-glycerol 3-phosphate from glycerol: step 1/1. With respect to regulation, inhibited by fructose 1,6-bisphosphate (FBP). Key enzyme in the regulation of glycerol uptake and metabolism. Catalyzes the phosphorylation of glycerol to yield sn-glycerol 3-phosphate. This chain is Glycerol kinase, found in Haemophilus influenzae (strain PittGG).